A 1381-amino-acid chain; its full sequence is DNA-directed RNA polymerase subunit beta'' (1381 aa).

The Zn(2+) site is built by cysteine 220, cysteine 293, cysteine 300, and cysteine 303.

It belongs to the RNA polymerase beta' chain family. RpoC2 subfamily. In terms of assembly, in plastids the minimal PEP RNA polymerase catalytic core is composed of four subunits: alpha, beta, beta', and beta''. When a (nuclear-encoded) sigma factor is associated with the core the holoenzyme is formed, which can initiate transcription. Zn(2+) is required as a cofactor.

It is found in the plastid. The protein resides in the chloroplast. It catalyses the reaction RNA(n) + a ribonucleoside 5'-triphosphate = RNA(n+1) + diphosphate. Functionally, DNA-dependent RNA polymerase catalyzes the transcription of DNA into RNA using the four ribonucleoside triphosphates as substrates. The chain is DNA-directed RNA polymerase subunit beta'' from Draba nemorosa (Woodland whitlowgrass).